The sequence spans 360 residues: Protein phosphatase 1 regulatory subunit 7 (360 aa).

Residues 1-65 (MAAERGAGQQ…DEDPEEGQEL (65 aa)) are disordered. Ala-2 carries the post-translational modification N-acetylalanine. Ser-12, Ser-24, Ser-27, Ser-44, and Ser-47 each carry phosphoserine. Residues 17–34 (EVDRRVESEESGDEEGKK) show a composition bias toward basic and acidic residues. The span at 53-63 (ERGDEDPEEGQ) shows a compositional bias: acidic residues. 11 LRR repeats span residues 77 to 98 (DAED…EVLK), 99 to 120 (KVKT…EGLQ), 121 to 142 (SLRE…DALT), 143 to 164 (ELEV…DKLT), 165 to 186 (RLKK…SSLH), 187 to 208 (QLQM…DTLT), 209 to 230 (NLES…DALT), 231 to 252 (NLTV…QSLV), 253 to 274 (NLRE…DNNN), 275 to 296 (KLTM…SHLT), and 297 to 318 (ELQE…DELK). Phosphoserine is present on Ser-322. The LRRCT domain maps to 331-360 (NPLQRDPQYRRKIMLALPSVRQIDATFVRF).

The protein belongs to the SDS22 family. As to quaternary structure, interacts with PPP1CA, PPP1CB and PPP1CC/PPP1G. Interacts with PPP1CC isoform 2 in motile caudal epididymal spermatozoa. In terms of tissue distribution, expressed in epididymal spermatozoa including the principal piece of the flagellum and the head-neck junction.

The protein resides in the nucleus. Functionally, regulatory subunit of protein phosphatase 1. Inactivates the PPP1CC isoform 2 during epididymal sperm maturation. The polypeptide is Protein phosphatase 1 regulatory subunit 7 (PPP1R7) (Bos taurus (Bovine)).